The primary structure comprises 70 residues: Large ribosomal subunit protein bL31 (70 aa).

Zn(2+) is bound by residues cysteine 16, cysteine 18, cysteine 37, and cysteine 40.

This sequence belongs to the bacterial ribosomal protein bL31 family. Type A subfamily. As to quaternary structure, part of the 50S ribosomal subunit. Requires Zn(2+) as cofactor.

Binds the 23S rRNA. The sequence is that of Large ribosomal subunit protein bL31 from Pasteurella multocida (strain Pm70).